We begin with the raw amino-acid sequence, 936 residues long: Phosphoenolpyruvate carboxylase (936 aa).

Active-site residues include histidine 155 and lysine 595.

This sequence belongs to the PEPCase type 1 family. In terms of assembly, homotetramer. Mg(2+) is required as a cofactor. It depends on Mn(2+) as a cofactor.

The enzyme catalyses oxaloacetate + phosphate = phosphoenolpyruvate + hydrogencarbonate. Exhibits positive allosteric property with acetyl-CoA and fructose 1,6-bisphosphate, and a negative one with L-aspartate and L-malate. In terms of biological role, forms oxaloacetate, a four-carbon dicarboxylic acid source for the tricarboxylic acid cycle. This Rhodothermus marinus (Rhodothermus obamensis) protein is Phosphoenolpyruvate carboxylase (ppc).